We begin with the raw amino-acid sequence, 130 residues long: Small ribosomal subunit protein uS9 (130 aa).

This sequence belongs to the universal ribosomal protein uS9 family.

In Hahella chejuensis (strain KCTC 2396), this protein is Small ribosomal subunit protein uS9.